A 326-amino-acid chain; its full sequence is Putative ankyrin repeat protein L25 (326 aa).

10 ANK repeats span residues 11–40 (RSEY…DLNV), 42–65 (KLFY…NIHV), 66–95 (DDEF…DIHV), 96–125 (NDDA…DIHA), 127–154 (NELV…DIHA), 155–184 (EDDE…NFRA), 185–214 (ENDY…DIHA), 216–244 (DEYA…DIHA), 246–274 (NDYG…NIHA), and 275–304 (KDDY…NIHA).

The polypeptide is Putative ankyrin repeat protein L25 (Acanthamoeba polyphaga mimivirus (APMV)).